We begin with the raw amino-acid sequence, 105 residues long: Nitrogen fixation nifHD2 region GlnB-like protein 1 (105 aa).

Belongs to the P(II) protein family.

Its function is as follows. Could be involved in the regulation of nitrogen fixation. The polypeptide is Nitrogen fixation nifHD2 region GlnB-like protein 1 (Methanosarcina barkeri).